We begin with the raw amino-acid sequence, 670 residues long: Probable membrane-anchored ferredoxin csal_0991 (670 aa).

A run of 5 helical transmembrane segments spans residues 2–22 (LDILLPILIFSALALAAIGAV), 68–90 (VATAGGFVAAMGLAIVVHGLGLA), 94–113 (LGWLLLAASATMFAGSLFVA), 135–155 (LMAFSLGIFVVTLPAVGVLPA), and 159–179 (GWLVALVLAAVVAWGLAELVF). 4Fe-4S ferredoxin-type domains follow at residues 241 to 271 (WNQLLGFDACVQCGRCEAVCPAFAAGQPLNP) and 316 to 347 (GTALVDAETLWSCTTCRACVEECPMMIEHVDA). [4Fe-4S] cluster is bound by residues C250, C253, C256, C260, C328, C331, C334, and C338. Residues 648 to 670 (NTPPATPASHDTAASQATEEVLS) form a disordered region. The segment covering 659–670 (TAASQATEEVLS) has biased composition (polar residues).

[4Fe-4S] cluster serves as cofactor.

The protein localises to the cell inner membrane. Its function is as follows. Participates in the electron transfer process during N,N-dimethylglycine (DMG) degradation to sarcosine. Probably transfers the electrons from N,N-dimethylglycine/sarcosine dehydrogenase (DMGDH) to the electron transfer flavoprotein (ETF) EtfA-EtfB. The chain is Probable membrane-anchored ferredoxin csal_0991 from Chromohalobacter salexigens (strain ATCC BAA-138 / DSM 3043 / CIP 106854 / NCIMB 13768 / 1H11).